A 62-amino-acid chain; its full sequence is Photosystem II reaction center protein Z (62 aa).

2 helical membrane-spanning segments follow: residues 8–28 (AVFA…VALA) and 41–61 (FSGV…NSFI).

It belongs to the PsbZ family. In terms of assembly, PSII is composed of 1 copy each of membrane proteins PsbA, PsbB, PsbC, PsbD, PsbE, PsbF, PsbH, PsbI, PsbJ, PsbK, PsbL, PsbM, PsbT, PsbY, PsbZ, Psb30/Ycf12, at least 3 peripheral proteins of the oxygen-evolving complex and a large number of cofactors. It forms dimeric complexes.

It is found in the plastid. It localises to the chloroplast thylakoid membrane. Functionally, may control the interaction of photosystem II (PSII) cores with the light-harvesting antenna, regulates electron flow through the 2 photosystem reaction centers. PSII is a light-driven water plastoquinone oxidoreductase, using light energy to abstract electrons from H(2)O, generating a proton gradient subsequently used for ATP formation. The polypeptide is Photosystem II reaction center protein Z (Pinus thunbergii (Japanese black pine)).